The chain runs to 356 residues: DNA polymerase IV (356 aa).

The 188-residue stretch at 1–188 folds into the UmuC domain; sequence MDTSRKIIHI…IPVTKFYGVG (188 aa). Mg(2+) is bound by residues Asp11 and Asp106. Residue Glu107 is part of the active site.

The protein belongs to the DNA polymerase type-Y family. Monomer. Mg(2+) serves as cofactor.

The protein resides in the cytoplasm. The catalysed reaction is DNA(n) + a 2'-deoxyribonucleoside 5'-triphosphate = DNA(n+1) + diphosphate. Poorly processive, error-prone DNA polymerase involved in untargeted mutagenesis. Copies undamaged DNA at stalled replication forks, which arise in vivo from mismatched or misaligned primer ends. These misaligned primers can be extended by PolIV. Exhibits no 3'-5' exonuclease (proofreading) activity. May be involved in translesional synthesis, in conjunction with the beta clamp from PolIII. The sequence is that of DNA polymerase IV from Listeria monocytogenes serovar 1/2a (strain ATCC BAA-679 / EGD-e).